We begin with the raw amino-acid sequence, 320 residues long: ATP-dependent 6-phosphofructokinase (320 aa).

Gly11 is an ATP binding site. 21–25 (RAVVR) provides a ligand contact to ADP. ATP is bound by residues 72–73 (RC) and 102–105 (GDGS). Asp103 is a binding site for Mg(2+). 125–127 (TID) serves as a coordination point for substrate. The active-site Proton acceptor is the Asp127. An ADP-binding site is contributed by Arg154. Substrate-binding positions include Arg162 and 169–171 (MGR). ADP contacts are provided by residues 185–187 (GAE) and 214–216 (KTH). Substrate-binding positions include Glu223, Arg244, and 250-253 (HIQR).

Belongs to the phosphofructokinase type A (PFKA) family. ATP-dependent PFK group I subfamily. Prokaryotic clade 'B1' sub-subfamily. In terms of assembly, homotetramer. Mg(2+) serves as cofactor.

The protein resides in the cytoplasm. It catalyses the reaction beta-D-fructose 6-phosphate + ATP = beta-D-fructose 1,6-bisphosphate + ADP + H(+). The protein operates within carbohydrate degradation; glycolysis; D-glyceraldehyde 3-phosphate and glycerone phosphate from D-glucose: step 3/4. Allosterically activated by ADP and other diphosphonucleosides, and allosterically inhibited by phosphoenolpyruvate. Its function is as follows. Catalyzes the phosphorylation of D-fructose 6-phosphate to fructose 1,6-bisphosphate by ATP, the first committing step of glycolysis. In Clostridium botulinum (strain Eklund 17B / Type B), this protein is ATP-dependent 6-phosphofructokinase.